The primary structure comprises 364 residues: Endopolygalacturonase B (364 aa).

The signal sequence occupies residues 1–20 (MHFLQNSLIAAAMGAALVAA). Residues 21-29 (APAADLDAR) constitute a propeptide that is removed on maturation. A disulfide bridge connects residues C32 and C47. The N-linked (GlcNAc...) asparagine glycan is linked to N138. PbH1 repeat units lie at residues 159–188 (SDHLTISDVTIDNSAGTSKGHNTDAFDIGS), 189–210 (STYITIDGATVYNQDDCIAINS), 211–231 (GEHITFTNGYCSGGHGLSIGS), 240–261 (VKSVTISNSKVVDSQNGVRIKT), 269–291 (VTDVTFQDIELSGITKYGLIVEQ), and 303–348 (TNGV…DITG). The active-site Proton donor is D203. C205 and C221 are oxidised to a cystine. H225 is an active-site residue. 2 cysteine pairs are disulfide-bonded: C331-C336 and C355-C364.

It belongs to the glycosyl hydrolase 28 family.

The protein resides in the secreted. It carries out the reaction (1,4-alpha-D-galacturonosyl)n+m + H2O = (1,4-alpha-D-galacturonosyl)n + (1,4-alpha-D-galacturonosyl)m.. In terms of biological role, involved in maceration and soft-rotting of plant tissue. Hydrolyzes the 1,4-alpha glycosidic bonds of de-esterified pectate in the smooth region of the plant cell wall. This Emericella nidulans (strain FGSC A4 / ATCC 38163 / CBS 112.46 / NRRL 194 / M139) (Aspergillus nidulans) protein is Endopolygalacturonase B (pgaB).